We begin with the raw amino-acid sequence, 90 residues long: Protein RALF-like 29 (90 aa).

Positions 1–25 are cleaved as a signal peptide; it reads MIKTKEVTFVTILIVLCVFISTIHA. 2 disulfide bridges follow: Cys-41–Cys-50 and Cys-63–Cys-69.

The protein belongs to the plant rapid alkalinization factor (RALF) family.

It is found in the secreted. Functionally, cell signaling peptide that may regulate plant stress, growth, and development. Mediates a rapid alkalinization of extracellular space by mediating a transient increase in the cytoplasmic Ca(2+) concentration leading to a calcium-dependent signaling events through a cell surface receptor and a concomitant activation of some intracellular mitogen-activated protein kinases. The protein is Protein RALF-like 29 (RALFL29) of Arabidopsis thaliana (Mouse-ear cress).